The following is a 349-amino-acid chain: Sperm acrosomal protein FSA-ACR.1 (349 aa).

Positions 1-8 are cleaved as a signal peptide; the sequence is MKEVYLVG. Positions 1-265 are disordered; that stretch reads MKEVYLVGYA…EQPSGIPPSS (265 aa). Positions 63-114 are enriched in basic and acidic residues; it reads TSGEHTSVEHASAEHSSTEHTSGEHASGEHTSGERATGEHTSSEHATSEHTS. Polar residues-rich tracts occupy residues 117-142 and 154-171; these read QPSGEQPSGEKSSGEQPSGEKSSGEQ and SGEQSSGEKSSAEQTSGE. The segment covering 178-189 has biased composition (basic and acidic residues); that stretch reads PSGEHAVAEKPS. Over residues 221–248 the composition is skewed to low complexity; the sequence is EQASIEKASSEQASAEQASAEQASSEQA. N342 carries N-linked (GlcNAc...) asparagine glycosylation.

To acrosomal proteins SP-10. As to expression, testis.

The protein resides in the cytoplasmic vesicle. Its subcellular location is the secretory vesicle. The protein localises to the acrosome. This is Sperm acrosomal protein FSA-ACR.1 from Vulpes vulpes (Red fox).